The following is a 390-amino-acid chain: Protein AC109 (390 aa).

The protein resides in the host cytoplasm. The protein localises to the host nucleus. Functionally, plays a role in the transport of the budded virion (BV) to the host nucleus and for occlusion of viral progeny. This Lepidoptera (butterflies and moths) protein is Protein AC109 (ORF109).